The chain runs to 741 residues: MLKKIVTALGMSGMLLASSNAIAEDTTTKNDNLSPQSVDLSPLRNLNKLDSPMDKDYNYHQAFKKLDTEQLKKDMQDLLTQSQDWWPADFGNYGPFFIRLSWHDAGTYRIYDGRGGANRGQQRFSPLNSWPDNVNLDKARQLLWPIKQKYGDAVSWSDLIVLAGTVSLESMGMKPIGFAFGREDDWQGDDTNWGLSPEEIMSSNVRDGKLAPAYAATQMGLIYVNPEGPDGKPDIKGAASEIRQAFRAMGMTDKETVALIAGGHTFGKTHGAVPEDKVKQAIGPAPDKAPIEQQGLGWHNSYGTGNGDDTMGSGLEGSWTSTPTFWNHDFLHNLYNLDWKKTLSPAGAHQWTPTNAKPENMVPDAHKPGVKHKPIMFTTDLALKEDDGFNKYTQEFYNNPEEFKEEFAKAWFKLTHRDMGPKSRYIGPWIPEQNFIWQDPVPAADYKQVSTQDIAQLEQDIINSGLTNQQLIKTAWDSASTYRKTDYRGGSNGARIALAPEKDWQMNEPAKLEVVLTKLKEIQTNFNNSKTDGTKVSLADLIVLGGNVGVEQAAKQAGYNIQMPFVPGRTDATQAQTDIESFNYLKTKSDGFINYTDGSVSADKLPQTLVEKASMLDLNIPEMTVLVGGMRALDVNYDNSQEGVLTTTPGQLNNSFFVNLLDMSTQWKKSDKKDGEYIGIDRKTGKQKWTASPVDLIFGSNSELKAVAQVYAENGNEQKFVNDFAKAWHKVMMLGRFDVQQ.

The first 23 residues, 1–23 (MLKKIVTALGMSGMLLASSNAIA), serve as a signal peptide directing secretion. The tryptophyl-tyrosyl-methioninium (Trp-Tyr) (with M-249) cross-link spans 102 to 223 (WHDAGTYRIY…YAATQMGLIY (122 aa)). Catalysis depends on His-103, which acts as the Proton acceptor. Positions 223 to 249 (YVNPEGPDGKPDIKGAASEIRQAFRAM) form a cross-link, tryptophyl-tyrosyl-methioninium (Tyr-Met) (with W-102). His-264 is a binding site for heme b.

It belongs to the peroxidase family. Peroxidase/catalase subfamily. As to quaternary structure, homodimer or homotetramer. Heme b serves as cofactor. Formation of the three residue Trp-Tyr-Met cross-link is important for the catalase, but not the peroxidase activity of the enzyme.

It catalyses the reaction H2O2 + AH2 = A + 2 H2O. The catalysed reaction is 2 H2O2 = O2 + 2 H2O. Functionally, bifunctional enzyme with both catalase and broad-spectrum peroxidase activity. This is Catalase-peroxidase from Francisella tularensis subsp. tularensis (strain FSC 198).